The chain runs to 681 residues: MTVPAARSGRKVYFIGLNAVPFLPLVAGLLRTYAEQDPRVAAGYDFQEPVFLVDGVQEMAAGITDPDVLALSCYVWNFRRQMKVARLVKERHPGMLVVAGGPHVPDRPGDFFARHPYVDVLVHGEGETAFRELLIERLADHPDYTRVPGVSVRHGTEAVPGRPAERLPRRIETPSPYLLGVMDGAVATCRQRDLRFYALWETNRGCPYSCAFCDWGSATMSALRLFDAERLQEEIEWFAEHDVEDLFVCDANFGILPRDLEIARALADARAATGAPKLIRVNFAKNSNDRVFEISKTWHDADLLMGTTLSMQSTDLDVLEAIDRKNIGLENYRKLQQRYATENIHTYTELILGLPLESPRSFRDGIGSLLEAGNHEDIRVYEFGILPNAPINTPEKIAGYGLRTVPKRLYVEEPGTPDDEAETVDMVMETNAMSRDEWVDCFGFVQAVQFLHNGCYTRYLSMYLRQRHDIGYTAFYERLQQYFGARPDTVLGSIYLRMRKLYHDYIDIPELPLANLVASQPDMAADLARYGKRRGWTIDNWGWLRIANDFERTYTELRDFVAALGVDDTSDPDLAEVFRFQQDVMLRPDYDPAAGRTTEYTADWPGYFTTGELRRRPVRMRLADQRFGANGRYTPVPGDLKAFARAAIGPSYPVSRIGHYRHRFEAAEVTSPAEPVLTEQR.

Residues 1 to 144 (MTVPAARSGR…IERLADHPDY (144 aa)) form the B12-binding domain. Cob(II)alamin is bound by residues Asn-18, Ser-72, Tyr-74, Val-75, His-103, Gly-126, and Glu-127. The 226-residue stretch at 192–417 (RDLRFYALWE…RLYVEEPGTP (226 aa)) folds into the Radical SAM core domain. [4Fe-4S] cluster is bound by residues Cys-206 and Cys-210. Phe-212 is a 5'-deoxyadenosine binding site. Cys-213 serves as a coordination point for [4Fe-4S] cluster. Positions 214 and 249 each coordinate cob(II)alamin. Positions 312, 349, and 384 each coordinate 5'-deoxyadenosine.

The protein belongs to the methyltransferase superfamily. The cofactor is [4Fe-4S] cluster. It depends on cob(II)alamin as a cofactor.

It catalyses the reaction (2R,3R,5S)-2-(S-pantetheinyl)-carbapenam-3-carboxylate + AH2 + 2 S-adenosyl-L-methionine = (2R,3R,5S,6R)-6-(methyl)-2-(S-pantetheinyl)-carbapenam-3-carboxylate + 5'-deoxyadenosine + L-methionine + A + S-adenosyl-L-homocysteine + 2 H(+). The catalysed reaction is (2R,3R,5S,6R)-6-(methyl)-2-(S-pantetheinyl)-carbapenam-3-carboxylate + AH2 + 2 S-adenosyl-L-methionine = (2R,3R,5S,6R)-6-(ethyl)-2-(S-pantetheinyl)-carbapenam-3-carboxylate + 5'-deoxyadenosine + L-methionine + A + S-adenosyl-L-homocysteine + 2 H(+). The protein operates within antibiotic biosynthesis. Its function is as follows. Methyltransferase involved in the biosynthesis of the beta-lactam carbapenem antibiotic thienamycin. Catalyzes two consecutive S-adenosyl-L-methionine-dependent methylations to build out the C6-ethyl side chain in a stereocontrolled manner. In vitro can use methyl viologen and NADPH as the iron-sulfur cluster reductants. The polypeptide is 2-(S-pantetheinyl)-carbapenam-3-carboxylate methyltransferase (Streptantibioticus cattleyicolor (strain ATCC 35852 / DSM 46488 / JCM 4925 / NBRC 14057 / NRRL 8057) (Streptomyces cattleya)).